The sequence spans 189 residues: Interferon alpha-17 (189 aa).

An N-terminal signal peptide occupies residues 1–23 (MALSFSLLMAVLVLSYKSICSLG). 2 disulfides stabilise this stretch: Cys24–Cys122 and Cys52–Cys162.

Belongs to the alpha/beta interferon family.

It is found in the secreted. Its function is as follows. Produced by macrophages, IFN-alpha have antiviral activities. Interferon stimulates the production of two enzymes: a protein kinase and an oligoadenylate synthetase. The chain is Interferon alpha-17 (IFNA17) from Homo sapiens (Human).